Reading from the N-terminus, the 357-residue chain is NAD kinase 1 (357 aa).

The active-site Proton acceptor is aspartate 68. NAD(+) is bound by residues 68–69 (DG), arginine 73, 175–176 (ND), arginine 186, aspartate 205, alanine 240, and glutamine 275.

The protein belongs to the NAD kinase family. Requires a divalent metal cation as cofactor.

Its subcellular location is the cytoplasm. It catalyses the reaction NAD(+) + ATP = ADP + NADP(+) + H(+). Its function is as follows. Involved in the regulation of the intracellular balance of NAD and NADP, and is a key enzyme in the biosynthesis of NADP. Catalyzes specifically the phosphorylation on 2'-hydroxyl of the adenosine moiety of NAD to yield NADP. In Streptomyces avermitilis (strain ATCC 31267 / DSM 46492 / JCM 5070 / NBRC 14893 / NCIMB 12804 / NRRL 8165 / MA-4680), this protein is NAD kinase 1.